The following is a 151-amino-acid chain: UPF0756 membrane protein Dred_1676 (151 aa).

The next 4 helical transmembrane spans lie at 9-29, 47-67, 75-95, and 111-131; these read VILL…CASV, THGL…PIAT, LLYN…ILAT, and IIFG…GQPV.

This sequence belongs to the UPF0756 family.

Its subcellular location is the cell membrane. The chain is UPF0756 membrane protein Dred_1676 from Desulforamulus reducens (strain ATCC BAA-1160 / DSM 100696 / MI-1) (Desulfotomaculum reducens).